Consider the following 295-residue polypeptide: 33 kDa chaperonin (295 aa).

2 cysteine pairs are disulfide-bonded: cysteine 237–cysteine 239 and cysteine 270–cysteine 273.

Belongs to the HSP33 family. In terms of processing, under oxidizing conditions two disulfide bonds are formed involving the reactive cysteines. Under reducing conditions zinc is bound to the reactive cysteines and the protein is inactive.

The protein resides in the cytoplasm. In terms of biological role, redox regulated molecular chaperone. Protects both thermally unfolding and oxidatively damaged proteins from irreversible aggregation. Plays an important role in the bacterial defense system toward oxidative stress. This is 33 kDa chaperonin from Symbiobacterium thermophilum (strain DSM 24528 / JCM 14929 / IAM 14863 / T).